We begin with the raw amino-acid sequence, 203 residues long: Recombination protein RecR (203 aa).

The C4-type zinc-finger motif lies at cysteine 56 to cysteine 71. Residues serine 79 to proline 179 enclose the Toprim domain.

Belongs to the RecR family.

Its function is as follows. May play a role in DNA repair. It seems to be involved in an RecBC-independent recombinational process of DNA repair. It may act with RecF and RecO. This chain is Recombination protein RecR, found in Mycobacterium sp. (strain JLS).